Reading from the N-terminus, the 500-residue chain is NAD(P)H-quinone oxidoreductase subunit 2 B, chloroplastic (500 aa).

Helical transmembrane passes span 14-34, 41-61, 78-98, 116-136, 166-186, 211-231, 242-262, 277-297, 305-325, 335-355, 376-396, 409-429, and 467-487; these read SILP…IDLT, WLYF…LFQL, FNGI…PLSM, LTAT…IIFI, LLMG…LYGL, ISIV…LVPF, APTS…LALA, WHLI…FIAI, MLAY…IAGD, YMLF…LFGL, ASFL…AGFF, GLYL…YYYL, and IIIC…VIAI.

Belongs to the complex I subunit 2 family. In terms of assembly, NDH is composed of at least 16 different subunits, 5 of which are encoded in the nucleus.

Its subcellular location is the plastid. It localises to the chloroplast thylakoid membrane. The enzyme catalyses a plastoquinone + NADH + (n+1) H(+)(in) = a plastoquinol + NAD(+) + n H(+)(out). The catalysed reaction is a plastoquinone + NADPH + (n+1) H(+)(in) = a plastoquinol + NADP(+) + n H(+)(out). NDH shuttles electrons from NAD(P)H:plastoquinone, via FMN and iron-sulfur (Fe-S) centers, to quinones in the photosynthetic chain and possibly in a chloroplast respiratory chain. The immediate electron acceptor for the enzyme in this species is believed to be plastoquinone. Couples the redox reaction to proton translocation, and thus conserves the redox energy in a proton gradient. The polypeptide is NAD(P)H-quinone oxidoreductase subunit 2 B, chloroplastic (Anthoceros angustus (Hornwort)).